We begin with the raw amino-acid sequence, 225 residues long: uncharacterized protein (225 aa).

This is an uncharacterized protein from Mycoplasma genitalium (strain ATCC 33530 / DSM 19775 / NCTC 10195 / G37) (Mycoplasmoides genitalium).